The chain runs to 808 residues: DNA replication licensing factor MCM3 (808 aa).

N-acetylalanine is present on Ala2. Ser160 and Ser275 each carry phosphoserine. Lys293 bears the N6-acetyllysine mark. The 208-residue stretch at 295–502 (IFDQLARSLA…QDREISDHVL (208 aa)) folds into the MCM domain. Gln353, Leu393, Glu394, Ala395, and Ala397 together coordinate ADP. Residues 477-480 (SRFD) carry the Arginine finger motif. Ala523 serves as a coordination point for ATP. Ser535 is modified (phosphoserine; by ATM). Position 547 is an N6-acetyllysine (Lys547). A Phosphoserine modification is found at Ser611. The segment at 662 to 738 (KKRKKRSEDE…QETKESQKVE (77 aa)) is disordered. An ATP-binding site is contributed by Arg664. Residues Ser668 and Ser672 each carry the phosphoserine modification. Acidic residues-rich tracts occupy residues 670-681 (DESETEDEEEKS) and 704-717 (SYDPYDFSDTEEEM). Phosphothreonine is present on Thr674. Ser681 carries the phosphoserine modification. Tyr708 carries the phosphotyrosine modification. Position 711 is a phosphoserine (Ser711). A phosphothreonine mark is found at Thr713, Thr722, and Thr725. Residues 727–738 (DSQETKESQKVE) are compositionally biased toward basic and acidic residues. A phosphoserine mark is found at Ser728 and Ser734.

Belongs to the MCM family. In terms of assembly, component of the MCM2-7 complex. The complex forms a toroidal hexameric ring with the proposed subunit order MCM2-MCM6-MCM4-MCM7-MCM3-MCM5. Component of the CMG helicase complex, a hexameric ring of related MCM2-7 subunits stabilized by CDC45 and the tetrameric GINS complex. Associated with the replication-specific DNA polymerase alpha. Interacts with MCMBP. Interacts with ANKRD17. Interacts with MCM3AP isoform MCM3AP; this interaction leads to MCM3 acetylation. Post-translationally, acetylated by MCM3AP. In terms of processing, O-glycosylated (O-GlcNAcylated), in a cell cycle-dependent manner.

Its subcellular location is the nucleus. It is found in the chromosome. It carries out the reaction ATP + H2O = ADP + phosphate + H(+). Acts as a component of the MCM2-7 complex (MCM complex) which is the replicative helicase essential for 'once per cell cycle' DNA replication initiation and elongation in eukaryotic cells. Core component of CDC45-MCM-GINS (CMG) helicase, the molecular machine that unwinds template DNA during replication, and around which the replisome is built. The active ATPase sites in the MCM2-7 ring are formed through the interaction surfaces of two neighboring subunits such that a critical structure of a conserved arginine finger motif is provided in trans relative to the ATP-binding site of the Walker A box of the adjacent subunit. The six ATPase active sites, however, are likely to contribute differentially to the complex helicase activity. Required for the entry in S phase and for cell division. In Pongo abelii (Sumatran orangutan), this protein is DNA replication licensing factor MCM3 (MCM3).